A 271-amino-acid chain; its full sequence is Chorismate dehydratase (271 aa).

This sequence belongs to the MqnA/MqnD family. MqnA subfamily.

The enzyme catalyses chorismate = 3-[(1-carboxyvinyl)-oxy]benzoate + H2O. It functions in the pathway quinol/quinone metabolism; menaquinone biosynthesis. In terms of biological role, catalyzes the dehydration of chorismate into 3-[(1-carboxyvinyl)oxy]benzoate, a step in the biosynthesis of menaquinone (MK, vitamin K2). This is Chorismate dehydratase from Thermus thermophilus (strain ATCC 27634 / DSM 579 / HB8).